Here is a 1678-residue protein sequence, read N- to C-terminus: Clathrin heavy chain (1678 aa).

WD40-like repeat regions lie at residues 24-67 (SFSF…RPIS), 68-107 (ADSAIMNPASKVIALKAQKTLQIFNIEMKSKMKAHTMNED), 108-149 (VVFW…SSLN), 150-195 (GCQI…QAIE), 196-257 (GHAA…PEAQ), 258-301 (NDFP…ISAD), and 302-330 (TIFVTAPHEASGGIIGVNRKGQVLSVTVD). CHCR repeat units lie at residues 538-684 (VAEE…QICV), 687-829 (ATKY…SEDI), 834-973 (ILVV…QLID), 980-1125 (LSET…VKEA), 1129-1270 (YIKA…FRLA), 1275-1421 (LHIV…LLLN), and 1424-1567 (LLVL…YDCF). Positions 1334-1643 (REHLELFWSR…IQMEPQLMIT (310 aa)) are involved in binding clathrin light chain. Residues 1552–1677 (EELLGWFLER…AGGRNMGYPY (126 aa)) are trimerization.

Belongs to the clathrin heavy chain family. In terms of assembly, clathrin triskelions, composed of 3 heavy chains and 3 light chains, are the basic subunits of the clathrin coat. Interacts with sau.

The protein resides in the cytoplasmic vesicle membrane. It is found in the membrane. The protein localises to the coated pit. Clathrin is the major protein of the polyhedral coat of coated pits and vesicles. This is Clathrin heavy chain (Chc) from Drosophila melanogaster (Fruit fly).